The following is a 119-amino-acid chain: Large ribosomal subunit protein bL20 (119 aa).

The protein belongs to the bacterial ribosomal protein bL20 family.

Its function is as follows. Binds directly to 23S ribosomal RNA and is necessary for the in vitro assembly process of the 50S ribosomal subunit. It is not involved in the protein synthesizing functions of that subunit. This chain is Large ribosomal subunit protein bL20, found in Clostridium perfringens (strain ATCC 13124 / DSM 756 / JCM 1290 / NCIMB 6125 / NCTC 8237 / Type A).